We begin with the raw amino-acid sequence, 177 residues long: MDFHGTTILGVKRNGKTVICGDGQVTMGETIFKGNAKKVRRLGEGKVISGFAGSVADALALYERFEGKYKSSHGNLMKAAVELTKEWRMDKALRRLEALLLVADKENIFLISGNGEVMEPQEDAIAIGSGGPYAYAAAMALLRNTDLDAEEIAQKAIKIAGEICIYTNDNITMEIIE.

Thr6 is a catalytic residue. Residues Gly161, Cys164, and Thr167 each contribute to the Na(+) site.

Belongs to the peptidase T1B family. HslV subfamily. In terms of assembly, a double ring-shaped homohexamer of HslV is capped on each side by a ring-shaped HslU homohexamer. The assembly of the HslU/HslV complex is dependent on binding of ATP.

It localises to the cytoplasm. It catalyses the reaction ATP-dependent cleavage of peptide bonds with broad specificity.. Allosterically activated by HslU binding. Functionally, protease subunit of a proteasome-like degradation complex believed to be a general protein degrading machinery. This Petrotoga mobilis (strain DSM 10674 / SJ95) protein is ATP-dependent protease subunit HslV.